Here is a 483-residue protein sequence, read N- to C-terminus: Protein FIZZY-RELATED 2 (483 aa).

Residues 1 to 28 (MEEEDPTASNVITNSNSSSMRNLSPAMN) are disordered. The span at 7-28 (TASNVITNSNSSSMRNLSPAMN) shows a compositional bias: polar residues. WD repeat units follow at residues 174-211 (QDDF…VTKL), 215-254 (GAED…RTRT), 257-294 (GHRL…DHVS), 298-337 (GHKS…PVLK), 340-382 (EHTA…HLSS), 384-425 (DTCS…KIAT), and 428-467 (GHTY…KSQN).

It belongs to the WD repeat CDC20/Fizzy family. As to quaternary structure, associates with the APC/C complex. Interacts with CDC20-1, CDC20-2, CYCA1-1, CYCA1-2, CYCA3-4, CYCB1-1 and CYCB1-2. Binds to GIG1 and PYM. Expressed in seedlings, flowers, leaves and roots. Expressed in the differentiating cell files of the root elongation zone.

It is found in the nucleus. It participates in protein modification; protein ubiquitination. In terms of biological role, activator protein that regulates the ubiquitin ligase activity and substrate specificity of the anaphase promoting complex/cyclosome (APC/C). Necessary and sufficient for endoreduplication and correct cell expansion. Controls meristem size by stimulating endoreduplication in the elongation zone. This is Protein FIZZY-RELATED 2 (FZR2) from Arabidopsis thaliana (Mouse-ear cress).